A 538-amino-acid chain; its full sequence is [Pyruvate dehydrogenase [acetyl-transferring]]-phosphatase 1, mitochondrial (538 aa).

The N-terminal 71 residues, M1–Y71, are a transit peptide targeting the mitochondrion. Positions V109–F525 constitute a PPM-type phosphatase domain. Positions 144 and 145 each coordinate Mn(2+). K202 carries the N6-acetyllysine modification. 2 residues coordinate Mn(2+): D418 and D516.

This sequence belongs to the PP2C family. In terms of assembly, heterodimer of a catalytic (PDP1) and a regulatory (PDPR) subunit. Requires Mn(2+) as cofactor. The cofactor is Mg(2+).

It localises to the mitochondrion. The catalysed reaction is O-phospho-L-seryl-[pyruvate dehydrogenase E1 alpha subunit] + H2O = L-seryl-[pyruvate dehydrogenase E1 alpha subunit] + phosphate. Magnesium-dependent and calcium-stimulated. PDP1 activity strongly depends on its Ca(2+)-dependent binding to the lipoyl domain of E2 subunit of component of the pyruvate dehydrogenase complex. In terms of biological role, mitochondrial enzyme that catalyzes the dephosphorylation and concomitant reactivation of the alpha subunit of the E1 component of the pyruvate dehydrogenase complex (PDC), thereby stimulating the conversion of pyruvate into acetyl-CoA. The chain is [Pyruvate dehydrogenase [acetyl-transferring]]-phosphatase 1, mitochondrial (PDP1) from Bos taurus (Bovine).